Consider the following 219-residue polypeptide: 7-cyano-7-deazaguanine synthase 2 (219 aa).

ATP is bound at residue 8 to 18 (YSGGMDSFTAL). Zn(2+)-binding residues include C185, C193, C196, and C199.

It belongs to the QueC family. Zn(2+) serves as cofactor.

It catalyses the reaction 7-carboxy-7-deazaguanine + NH4(+) + ATP = 7-cyano-7-deazaguanine + ADP + phosphate + H2O + H(+). The protein operates within purine metabolism; 7-cyano-7-deazaguanine biosynthesis. Functionally, catalyzes the ATP-dependent conversion of 7-carboxy-7-deazaguanine (CDG) to 7-cyano-7-deazaguanine (preQ(0)). This chain is 7-cyano-7-deazaguanine synthase 2, found in Colwellia psychrerythraea (strain 34H / ATCC BAA-681) (Vibrio psychroerythus).